Consider the following 493-residue polypeptide: 3-octaprenyl-4-hydroxybenzoate carboxy-lyase (493 aa).

Asn172 is a binding site for Mn(2+). Prenylated FMN contacts are provided by residues 175 to 177, 189 to 191, and 194 to 195; these read IYR, RWL, and RG. Glu238 is a binding site for Mn(2+). Residue Asp287 is the Proton donor of the active site.

The protein belongs to the UbiD family. In terms of assembly, homohexamer. Requires prenylated FMN as cofactor. Mn(2+) is required as a cofactor.

Its subcellular location is the cell membrane. The catalysed reaction is a 4-hydroxy-3-(all-trans-polyprenyl)benzoate + H(+) = a 2-(all-trans-polyprenyl)phenol + CO2. Its pathway is cofactor biosynthesis; ubiquinone biosynthesis. In terms of biological role, catalyzes the decarboxylation of 3-octaprenyl-4-hydroxy benzoate to 2-octaprenylphenol, an intermediate step in ubiquinone biosynthesis. In Shewanella piezotolerans (strain WP3 / JCM 13877), this protein is 3-octaprenyl-4-hydroxybenzoate carboxy-lyase.